A 160-amino-acid chain; its full sequence is uncharacterized protein (160 aa).

Residues 1–33 are Extracellular-facing; sequence MPLRPCRHHQGFLPKKQWRAKFPQLIVLMGRVA. Residues 34-54 form a helical membrane-spanning segment; sequence AEELLPAVAVAAVVVAVVVAV. Residues 55–68 lie on the Cytoplasmic side of the membrane; it reads ERVVPLLFVHRPDS. A helical transmembrane segment spans residues 69 to 89; the sequence is FFLIFFFQSCFVCCCCCCSCS. The Extracellular segment spans residues 90-119; it reads TSLKAYSSEKEKQKYGKRGNGNTPLVQRLV. Residues 120–140 traverse the membrane as a helical segment; that stretch reads TLSYLALLILVLSIELLTWFV. At 141-160 the chain is on the cytoplasmic side; sequence KKQRTGNKKQKDKEKNALLL.

It localises to the membrane. This is an uncharacterized protein from Saccharomyces cerevisiae (strain ATCC 204508 / S288c) (Baker's yeast).